Here is a 282-residue protein sequence, read N- to C-terminus: NADPH-dependent 7-cyano-7-deazaguanine reductase (282 aa).

88-90 provides a ligand contact to substrate; it reads IES. Residue 90-91 participates in NADPH binding; sequence SK. Cysteine 190 acts as the Thioimide intermediate in catalysis. Aspartate 197 acts as the Proton donor in catalysis. Position 229–230 (229–230) interacts with substrate; sequence HE. An NADPH-binding site is contributed by 258 to 259; sequence RG.

The protein belongs to the GTP cyclohydrolase I family. QueF type 2 subfamily. Homodimer.

It is found in the cytoplasm. The enzyme catalyses 7-aminomethyl-7-carbaguanine + 2 NADP(+) = 7-cyano-7-deazaguanine + 2 NADPH + 3 H(+). Its pathway is tRNA modification; tRNA-queuosine biosynthesis. Functionally, catalyzes the NADPH-dependent reduction of 7-cyano-7-deazaguanine (preQ0) to 7-aminomethyl-7-deazaguanine (preQ1). This chain is NADPH-dependent 7-cyano-7-deazaguanine reductase, found in Salmonella paratyphi A (strain ATCC 9150 / SARB42).